The sequence spans 956 residues: Translation initiation factor IF-2 (956 aa).

The tract at residues 50–351 (FPADSGGAAN…APSIGGVQVP (302 aa)) is disordered. Residues 64 to 95 (APKPARAPKPAPKAAPAPPVEEAPAEPAPPAA) show a composition bias toward pro residues. 2 stretches are compositionally biased toward low complexity: residues 96-107 (PEVVAAPEAPVA) and 121-136 (PEAP…ARPA). The span at 146–155 (AAEKPADTRT) shows a compositional bias: basic and acidic residues. Gly residues-rich tracts occupy residues 171 to 192 (RPGG…GGPR) and 206 to 234 (RPGG…GQGG). The span at 235-254 (SRPSPGMMPGRSAVGRPGAP) shows a compositional bias: low complexity. The segment covering 255–320 (ARGGSGGPGG…GTQGAFGRAG (66 aa)) has biased composition (gly residues). The segment covering 324 to 333 (VRARKSRRAK) has biased composition (basic residues). The region spanning 448–619 (ARPPVVTVMG…AVLLTADAAL (172 aa)) is the tr-type G domain. The G1 stretch occupies residues 457–464 (GHVDHGKT). Residue 457-464 (GHVDHGKT) participates in GTP binding. The segment at 482–486 (GITQH) is G2. A G3 region spans residues 507–510 (DTPG). GTP is bound by residues 507 to 511 (DTPGH) and 561 to 564 (NKVD). Positions 561–564 (NKVD) are G4. Residues 597–599 (SAK) form a G5 region.

Belongs to the TRAFAC class translation factor GTPase superfamily. Classic translation factor GTPase family. IF-2 subfamily.

The protein resides in the cytoplasm. Functionally, one of the essential components for the initiation of protein synthesis. Protects formylmethionyl-tRNA from spontaneous hydrolysis and promotes its binding to the 30S ribosomal subunits. Also involved in the hydrolysis of GTP during the formation of the 70S ribosomal complex. The sequence is that of Translation initiation factor IF-2 from Beutenbergia cavernae (strain ATCC BAA-8 / DSM 12333 / CCUG 43141 / JCM 11478 / NBRC 16432 / NCIMB 13614 / HKI 0122).